We begin with the raw amino-acid sequence, 353 residues long: Aliphatic aldoxime dehydratase (353 aa).

Ser-219 serves as a coordination point for an aliphatic aldoxime. His-299 contacts heme b. His-320 provides a ligand contact to an aliphatic aldoxime. The active site involves His-320.

This sequence belongs to the heme-containing dehydratase family. As to quaternary structure, homodimer. It depends on heme b as a cofactor.

It catalyses the reaction an aliphatic aldoxime = a nitrile + H2O. Active when the heme iron is in the ferrous state. Activated by FMN, Fe(2+), Sn(2+), Na(2)SO(3), Na(2)S and vitamin K3. Its function is as follows. Catalyzes the dehydration of aldoximes to their corresponding nitrile. Is active toward various arylalkyl- and alkyl-aldoximes, and to a lesser extent toward aryl-aldoximes. The polypeptide is Aliphatic aldoxime dehydratase (Rhodococcus globerulus).